The sequence spans 163 residues: Lysosomal enzyme trafficking factor (163 aa).

Transmembrane regions (helical) follow at residues 40–60 and 98–118; these read MGWIGVGLYLLASAAAFYYVF and LPFWFWTVVFLIPYLQMFLFL.

Belongs to the LYSET family. As to quaternary structure, interacts with GNPTAB; this interaction is important for proper localization of GNPTAB in Golgi stacks. Interacts with MBTPS1.

It localises to the golgi apparatus membrane. In terms of biological role, required for mannose-6-phosphate-dependent trafficking of lysosomal enzymes. LYSET bridges GlcNAc-1-phosphate transferase (GNPTAB), to the membrane-bound transcription factor site-1 protease (MBTPS1), thus allowing proteolytic activation of the GNPTAB. GNPTAB is involved in the regulation of M6P-dependent Golgi-to-lysosome trafficking of lysosomal enzymes. LYSET is thus an essential factor for maturation and delivery of lysosomal hydrolases. This is Lysosomal enzyme trafficking factor (LYSET) from Bos taurus (Bovine).